The primary structure comprises 576 residues: MISGILASPGITFGKALLLKNEILSINYKKISNQDIHQEVKKFINGKNKTICQLQEIKNKTQQKFENTQSNIFEGHIMLLEDDEFQQKIISLIQDRNISSEYATKIIIEEHAKTLEQLNDEYLKNRAIDIQDIGNRLLKNILNIDIKDLNNIKNPVILIARDLTPSETAQINLKKVLGFITDLGGQTSHTSIIARSLELPAIVGTKNITEKAKNDDFIILDSINNKISINPSLEEIHRIKQKKKKYESEKKLLIESKNLYAITKDKHKVEIGANISTIQDINNAKKYGAECIGLYRTEFLFMNRNYLPSEEEQFNTYKTIAEEMKNKSIIIRTMDVGGDKNISYMNIPKEENPFLGWRAIRIAIDRKEILHAQLKAILRASAFGKLRIMFPMIISVEEVRTLQYELEKLKQLLHHQKIPFNAKIEVGIMIETPASAIIAHHLAQEVDFFSIGSNDLTQYTLAVDRGNDLISHLYNPMSPSVLSLIQQVINASHKVGKWTGMCGELAGDEKATLLLLGMGLDEFSMSAATIPKIKKIIRESTFLDVKKLAKKVLLQPTYNEVNNTINTFININNKNK.

The Tele-phosphohistidine intermediate role is filled by His189. Positions 296 and 332 each coordinate phosphoenolpyruvate. The Mg(2+) site is built by Glu431 and Asp455. Phosphoenolpyruvate contacts are provided by residues 454-455 and Arg465; that span reads ND. The Proton donor role is filled by Cys502.

This sequence belongs to the PEP-utilizing enzyme family. In terms of assembly, homodimer. Mg(2+) is required as a cofactor.

It localises to the cytoplasm. It carries out the reaction L-histidyl-[protein] + phosphoenolpyruvate = N(pros)-phospho-L-histidyl-[protein] + pyruvate. General (non sugar-specific) component of the phosphoenolpyruvate-dependent sugar phosphotransferase system (sugar PTS). This major carbohydrate active-transport system catalyzes the phosphorylation of incoming sugar substrates concomitantly with their translocation across the cell membrane. Enzyme I transfers the phosphoryl group from phosphoenolpyruvate (PEP) to the phosphoryl carrier protein (HPr). The polypeptide is Phosphoenolpyruvate-protein phosphotransferase (ptsI) (Buchnera aphidicola subsp. Baizongia pistaciae (strain Bp)).